A 63-amino-acid chain; its full sequence is 2-hydroxymuconate tautomerase (63 aa).

Catalysis depends on Pro-2, which acts as the Proton acceptor; via imino nitrogen.

The protein belongs to the 4-oxalocrotonate tautomerase family. In terms of assembly, homohexamer.

It catalyses the reaction (2Z,4E)-2-hydroxyhexa-2,4-dienedioate = (3E)-2-oxohex-3-enedioate. Its pathway is xenobiotic degradation; toluene degradation. It participates in xenobiotic degradation; xylene degradation. Functionally, catalyzes the ketonization of 2-hydroxymuconate stereoselectively to yield 2-oxo-3-hexenedioate. This Pseudomonas putida (Arthrobacter siderocapsulatus) protein is 2-hydroxymuconate tautomerase (xylH).